The chain runs to 180 residues: Ribulose bisphosphate carboxylase small subunit, chloroplastic 3 (180 aa).

The transit peptide at 1–56 directs the protein to the chloroplast; the sequence is MASSVMSSAAVATRGNGAQASMVAPFTGLKSTASFPVSRKQNLDITSIASNGGRVS.

The protein belongs to the RuBisCO small chain family. In terms of assembly, heterohexadecamer of 8 large and 8 small subunits. (Microbial infection) Binds to tobamovirus movement protein; this interaction seems required for viral systemic movement.

It localises to the plastid. It is found in the chloroplast. The protein resides in the cell junction. The protein localises to the plasmodesma. Functionally, ruBisCO catalyzes two reactions: the carboxylation of D-ribulose 1,5-bisphosphate, the primary event in carbon dioxide fixation, as well as the oxidative fragmentation of the pentose substrate. Both reactions occur simultaneously and in competition at the same active site. Although the small subunit is not catalytic it is essential for maximal activity. Involved in antiviral defenses. The chain is Ribulose bisphosphate carboxylase small subunit, chloroplastic 3 from Solanum lycopersicum (Tomato).